The sequence spans 379 residues: Alcohol dehydrogenase 1 (379 aa).

Zn(2+) is bound by residues C47, T49, H69, C99, C102, C105, C113, and C177. Residues T49 and H69 each contribute to the an alcohol site. T49 serves as a coordination point for NAD(+). Residues 202 to 207 (GLGAVG), D226, R231, T272, V295, 295 to 297 (VGV), F322, and R372 each bind NAD(+).

It belongs to the zinc-containing alcohol dehydrogenase family. As to quaternary structure, homodimer. Zn(2+) serves as cofactor.

The protein localises to the cytoplasm. It carries out the reaction a primary alcohol + NAD(+) = an aldehyde + NADH + H(+). It catalyses the reaction a secondary alcohol + NAD(+) = a ketone + NADH + H(+). This Cenchrus americanus (Pearl millet) protein is Alcohol dehydrogenase 1 (ADH1).